Consider the following 944-residue polypeptide: Protein phosphatase 1 regulatory subunit 37 homolog (944 aa).

The tract at residues 42 to 71 (QQQSHSAATSVRKKTCQDANSSGEDPNGRI) is disordered. LRR repeat units follow at residues 203–224 (SCVR…TTIF), 232–255 (SLQM…CKMA), 262–282 (SLTC…LVLI), 290–311 (GLRE…HIYQ), and 318–338 (SLQL…RHIC). The interval 517–598 (EEGDSGVEKK…KERHQRFVRS (82 aa)) is disordered. Residues 522 to 542 (GVEKKDGNECEGEDNKDRQDT) are compositionally biased toward basic and acidic residues. Composition is skewed to polar residues over residues 543–554 (PAETENGVSSNE) and 567–585 (PESN…STSK). Positions 586 to 595 (LSRKERHQRF) are enriched in basic residues.

It belongs to the PPP1R37 family.

The polypeptide is Protein phosphatase 1 regulatory subunit 37 homolog (Caenorhabditis elegans).